The sequence spans 251 residues: Imidazole glycerol phosphate synthase subunit HisF (251 aa).

Catalysis depends on residues Asp11 and Asp130.

Belongs to the HisA/HisF family. Heterodimer of HisH and HisF.

The protein localises to the cytoplasm. It carries out the reaction 5-[(5-phospho-1-deoxy-D-ribulos-1-ylimino)methylamino]-1-(5-phospho-beta-D-ribosyl)imidazole-4-carboxamide + L-glutamine = D-erythro-1-(imidazol-4-yl)glycerol 3-phosphate + 5-amino-1-(5-phospho-beta-D-ribosyl)imidazole-4-carboxamide + L-glutamate + H(+). Its pathway is amino-acid biosynthesis; L-histidine biosynthesis; L-histidine from 5-phospho-alpha-D-ribose 1-diphosphate: step 5/9. In terms of biological role, IGPS catalyzes the conversion of PRFAR and glutamine to IGP, AICAR and glutamate. The HisF subunit catalyzes the cyclization activity that produces IGP and AICAR from PRFAR using the ammonia provided by the HisH subunit. The chain is Imidazole glycerol phosphate synthase subunit HisF from Chlorobium limicola (strain DSM 245 / NBRC 103803 / 6330).